A 155-amino-acid chain; its full sequence is Ribonuclease H (155 aa).

In terms of domain architecture, RNase H type-1 spans 1–146 (MNALFAWTDG…ADELARAGMA (146 aa)). 4 residues coordinate Mg(2+): Asp9, Glu52, Asp74, and Asp138.

Belongs to the RNase H family. In terms of assembly, monomer. Mg(2+) is required as a cofactor.

It localises to the cytoplasm. It carries out the reaction Endonucleolytic cleavage to 5'-phosphomonoester.. Its function is as follows. Endonuclease that specifically degrades the RNA of RNA-DNA hybrids. In Paracoccus denitrificans (strain Pd 1222), this protein is Ribonuclease H.